A 426-amino-acid polypeptide reads, in one-letter code: Glutamyl-tRNA reductase (426 aa).

Substrate contacts are provided by residues 52–55 (TCNR), Ser110, 115–117 (EYE), and Gln121. The Nucleophile role is filled by Cys53. 190–195 (GAGEMA) is an NADP(+) binding site.

Belongs to the glutamyl-tRNA reductase family. As to quaternary structure, homodimer.

It catalyses the reaction (S)-4-amino-5-oxopentanoate + tRNA(Glu) + NADP(+) = L-glutamyl-tRNA(Glu) + NADPH + H(+). Its pathway is porphyrin-containing compound metabolism; protoporphyrin-IX biosynthesis; 5-aminolevulinate from L-glutamyl-tRNA(Glu): step 1/2. In terms of biological role, catalyzes the NADPH-dependent reduction of glutamyl-tRNA(Glu) to glutamate 1-semialdehyde (GSA). The polypeptide is Glutamyl-tRNA reductase (Saccharolobus solfataricus (strain ATCC 35092 / DSM 1617 / JCM 11322 / P2) (Sulfolobus solfataricus)).